The primary structure comprises 666 residues: 1-deoxy-D-xylulose-5-phosphate synthase (666 aa).

Residues His103 and 144–146 each bind thiamine diphosphate; that span reads AHS. Asp175 lines the Mg(2+) pocket. Thiamine diphosphate is bound by residues 176-177, Asn204, Tyr314, and Glu396; that span reads GA. Asn204 lines the Mg(2+) pocket.

This sequence belongs to the transketolase family. DXPS subfamily. As to quaternary structure, homodimer. Mg(2+) is required as a cofactor. Requires thiamine diphosphate as cofactor.

It carries out the reaction D-glyceraldehyde 3-phosphate + pyruvate + H(+) = 1-deoxy-D-xylulose 5-phosphate + CO2. It participates in metabolic intermediate biosynthesis; 1-deoxy-D-xylulose 5-phosphate biosynthesis; 1-deoxy-D-xylulose 5-phosphate from D-glyceraldehyde 3-phosphate and pyruvate: step 1/1. Its function is as follows. Catalyzes the acyloin condensation reaction between C atoms 2 and 3 of pyruvate and glyceraldehyde 3-phosphate to yield 1-deoxy-D-xylulose-5-phosphate (DXP). The polypeptide is 1-deoxy-D-xylulose-5-phosphate synthase (Nitrobacter winogradskyi (strain ATCC 25391 / DSM 10237 / CIP 104748 / NCIMB 11846 / Nb-255)).